Consider the following 632-residue polypeptide: Probable membrane transporter protein MamO (632 aa).

A helical membrane pass occupies residues 25–45 (APVSILAFLILVTFAWGAYLL). A protease-like region spans residues 78 to 268 (LYYTVPPAVV…VIVSHLQDVV (191 aa)). Residues H148 and H263 each contribute to the a divalent metal cation site. 7 helical membrane-spanning segments follow: residues 340 to 360 (IGGY…AAGV), 412 to 432 (LVQW…VVIG), 434 to 454 (FIGN…FALI), 513 to 533 (AVLG…GGVI), 550 to 570 (IANS…VAFI), 582 to 602 (APVT…ILGA), and 612 to 632 (VLKG…LTTV). Positions 365–632 (MTMGGGVLQV…AIAIKMLTTV (268 aa)) are TSUP-like.

It in the N-terminal section; belongs to the peptidase S1C family. In the C-terminal section; belongs to the 4-toluene sulfonate uptake permease (TSUP) (TC 2.A.102) family. A metal cation serves as cofactor. In terms of processing, subject to proteolytic cleavage by MamE.

The protein resides in the magnetosome membrane. In terms of biological role, plays 2 roles; promotes magnetite nucleation/formation and activates the MamE protease. Despite its near conservation of a protease-like sequence, this is probably not a protease. Required in conjunction with MamP for proteolysis of at least MamE, itself and MamP. May transport a solute that controls MamE's protease activity. May place individual iron atoms into the magnetite lattice. One of 7 genes (mamLQBIEMO) able to induce magnetosome membrane biogenesis; coexpression of mamLQRBIEMO in a deletion of the 17 gene mamAB operon restores magnetosome vesicle formation but not magnetite biosynthesis. This is Probable membrane transporter protein MamO from Magnetospirillum gryphiswaldense (strain DSM 6361 / JCM 21280 / NBRC 15271 / MSR-1).